The primary structure comprises 246 residues: Chaperone protein SefB (246 aa).

The N-terminal stretch at 1–24 is a signal peptide; it reads MYILNKFIRRTVIFFFFCYLPIAS. Cysteine 124 and cysteine 155 are disulfide-bonded.

Belongs to the periplasmic pilus chaperone family.

Its subcellular location is the periplasm. Required for the biogenesis of the SefA (SEF14) fimbria. This is Chaperone protein SefB (sefB) from Salmonella enteritidis.